Reading from the N-terminus, the 167-residue chain is UPF0303 protein mlr5144 (167 aa).

The protein belongs to the UPF0303 family.

This is UPF0303 protein mlr5144 from Mesorhizobium japonicum (strain LMG 29417 / CECT 9101 / MAFF 303099) (Mesorhizobium loti (strain MAFF 303099)).